The primary structure comprises 1070 residues: MCFRSIMPPAMADTLDIWAVDSQIASDGSISVDFLLPTGIYIQLEVPREATISYIKQMLWKQVHNYPMFNLLMDIDSYMFACVNQTAVYEELEDETRRLCDVRPFLPVLKLVTRSCDPAEKLDSKIGVLIGKGLHEFDALKDPEVNEFRRKMRKFSEDKIQSLVGLSWIDWLKHTYPPEHEPSVLENLEDKLYGGKLVVAVHFENSQDVFSFQVSPNLNPIKINELAIQKRLTIRGKEEEASPCDYVLQVSGRVEYVFGDHPLIQFQYIRNCVMNRTLPHFILVECCKIKKMYEQEMIAIEAAINRNSSSLPLPLPPKKTRVISHVWGNNNPFQIVLVKGNKLNTEETVKVHVRAGLFHGTELLCKTVVSSEISGKNDHIWNEQLEFDINICDLPRMARLCFAVYAVLDKVKTKKSTKTINPSKYQTIRKAGKVHYPVAWVNTMVFDFKGQLRSGDVILHSWSSFPDELEEMLNPMGTVQTNPYAENATALHIKFPENKKQPYYYPPFDKIIEKAAEIASGDSANVSSRGGKKFLAVLKEILDRDPLSQLCENEMDLIWTLRQDCRENFPQSLPKLLLSIKWNKLEDVAQLQALLQIWPKLPPREALELLDFNYPDQYVREYAVGCLRQMSDEELSQYLLQLVQVLKYEPFLDCALSRFLLERALDNRRIGQFLFWHLRSEVHTPAVSIQFGVILEAYCRGSVGHMKVLSKQVEALNKLKTLNSLIKLNAMKLNRAKGKEAMHTCLKQSAYREALSDLQSPLNPCVILSELYVEKCRYMDSKMKPLWLVYSNRAFGEDAVGVIFKNGDDLRQDMLTLQMLRLMDLLWKEAGLDLRMLPYGCLATGDRSGLIEVVSTSETIADIQLNSSNVAATAAFNKDALLNWLKEYNSGDDLDRAIEEFTLSCAGYCVASYVLGIGDRHSDNIMVKKTGQLFHIDFGHILGNFKSKFGIKRERVPFILTYDFIHVIQQGKTGNTEKFGRFRQCCEDAYLILRRHGNLFITLFALMLTAGLPELTSVKDIQYLKDSLALGKSEEEALKQFKQKFDEALRESWTTKVNWMAHTVRKDYRS.

The PI3K-ABD domain maps to 26–115; the sequence is SDGSISVDFL…LPVLKLVTRS (90 aa). A PI3K-RBD domain is found at 194 to 285; the sequence is GGKLVVAVHF…RTLPHFILVE (92 aa). The residue at position 324 (S324) is a Phosphoserine. One can recognise a C2 PI3K-type domain in the interval 327–496; the sequence is WGNNNPFQIV…NATALHIKFP (170 aa). The Nuclear localization signal (NLS) motif lies at 410-418; that stretch reads KVKTKKSTK. In terms of domain architecture, PIK helical spans 524–701; that stretch reads ANVSSRGGKK…GVILEAYCRG (178 aa). One can recognise a PI3K/PI4K catalytic domain in the interval 772 to 1053; sequence YVEKCRYMDS…KFDEALRESW (282 aa). The segment at 778 to 784 is G-loop; that stretch reads YMDSKMK. The catalytic loop stretch occupies residues 916–924; it reads GIGDRHSDN. The activation loop stretch occupies residues 935–961; sequence HIDFGHILGNFKSKFGIKRERVPFILT. Residue S1070 is modified to Phosphoserine; by autocatalysis.

This sequence belongs to the PI3/PI4-kinase family. In terms of assembly, heterodimer of a catalytic subunit PIK3CB and a p85 regulatory subunit (PIK3R1, PIK3R2 or PIK3R3). Interaction with PIK3R2 is required for nuclear localization and nuclear export. Part of a complex with PIK3R1 and PTEN. Binding to PTEN may antagonize the lipid kinase activity under normal growth conditions. Part of a complex involved in autophagosome formation composed of PIK3C3 and PIK3R4. Interacts with BECN1, ATG14 and RAB5A. Post-translationally, autophosphorylation at Ser-1070 negatively regulates the phosphatidylinositol-4,5-bisphosphate 3-kinase activity.

Its subcellular location is the cytoplasm. The protein resides in the nucleus. The catalysed reaction is a 1,2-diacyl-sn-glycero-3-phospho-(1D-myo-inositol-4,5-bisphosphate) + ATP = a 1,2-diacyl-sn-glycero-3-phospho-(1D-myo-inositol-3,4,5-trisphosphate) + ADP + H(+). It carries out the reaction 1-octadecanoyl-2-(5Z,8Z,11Z,14Z)-eicosatetraenoyl-sn-glycero-3-phospho-1D-myo-inositol 4,5-bisphosphate + ATP = 1-octadecanoyl-2-(5Z,8Z,11Z,14Z-eicosatetraenoyl)-sn-glycero-3-phospho-(1D-myo-inositol 3,4,5-triphosphate) + ADP + H(+). It catalyses the reaction L-seryl-[protein] + ATP = O-phospho-L-seryl-[protein] + ADP + H(+). Its pathway is phospholipid metabolism; phosphatidylinositol phosphate biosynthesis. Phosphoinositide-3-kinase (PI3K) phosphorylates phosphatidylinositol (PI) derivatives at position 3 of the inositol ring to produce 3-phosphoinositides. Uses ATP and PtdIns(4,5)P2 (phosphatidylinositol 4,5-bisphosphate) to generate phosphatidylinositol 3,4,5-trisphosphate (PIP3). PIP3 plays a key role by recruiting PH domain-containing proteins to the membrane, including AKT1 and PDPK1, activating signaling cascades involved in cell growth, survival, proliferation, motility and morphology. Involved in the activation of AKT1 upon stimulation by G-protein coupled receptors (GPCRs) ligands such as CXCL12, sphingosine 1-phosphate, and lysophosphatidic acid. May also act downstream receptor tyrosine kinases. Required in different signaling pathways for stable platelet adhesion and aggregation. Plays a role in platelet activation signaling triggered by GPCRs, alpha-IIb/beta-3 integrins (ITGA2B/ ITGB3) and ITAM (immunoreceptor tyrosine-based activation motif)-bearing receptors such as GP6. Regulates the strength of adhesion of ITGA2B/ ITGB3 activated receptors necessary for the cellular transmission of contractile forces. Required for platelet aggregation induced by F2 (thrombin) and thromboxane A2 (TXA2). Has a role in cell survival. May have a role in cell migration. Involved in the early stage of autophagosome formation. Modulates the intracellular level of PtdIns3P (phosphatidylinositol 3-phosphate) and activates PIK3C3 kinase activity. May act as a scaffold, independently of its lipid kinase activity to positively regulate autophagy. May have a role in insulin signaling as scaffolding protein in which the lipid kinase activity is not required. May have a kinase-independent function in regulating cell proliferation and in clathrin-mediated endocytosis. Mediator of oncogenic signal in cell lines lacking PTEN. The lipid kinase activity is necessary for its role in oncogenic transformation. Required for the growth of ERBB2 and RAS driven tumors. Also has a protein kinase activity showing autophosphorylation. The polypeptide is Phosphatidylinositol 4,5-bisphosphate 3-kinase catalytic subunit beta isoform (Pik3cb) (Rattus norvegicus (Rat)).